We begin with the raw amino-acid sequence, 326 residues long: DNA-directed RNA polymerase subunit alpha (326 aa).

Residues 1–231 form an alpha N-terminal domain (alpha-NTD) region; sequence MQTNLLKPKI…DQLVVFAALE (231 aa). Residues 247-326 are alpha C-terminal domain (alpha-CTD); the sequence is VDPMLMRPVD…ESWPPANLEK (80 aa).

The protein belongs to the RNA polymerase alpha chain family. Homodimer. The RNAP catalytic core consists of 2 alpha, 1 beta, 1 beta' and 1 omega subunit. When a sigma factor is associated with the core the holoenzyme is formed, which can initiate transcription.

It catalyses the reaction RNA(n) + a ribonucleoside 5'-triphosphate = RNA(n+1) + diphosphate. Its function is as follows. DNA-dependent RNA polymerase catalyzes the transcription of DNA into RNA using the four ribonucleoside triphosphates as substrates. The sequence is that of DNA-directed RNA polymerase subunit alpha from Polynucleobacter asymbioticus (strain DSM 18221 / CIP 109841 / QLW-P1DMWA-1) (Polynucleobacter necessarius subsp. asymbioticus).